We begin with the raw amino-acid sequence, 664 residues long: CRISPR-associated DNA-binding protein Cas12m (664 aa).

The segment at 1–137 (MKRVTITIDG…AKYRELIGSD (137 aa)) is recognition domain (REC1-N). Positions 138–212 (EETAQMDTEI…AAKDRIRAAG (75 aa)) are recognition domain (REC2). The recognition domain (REC1-C) stretch occupies residues 213–270 (NDIENLEKDRQAAVIKAYNNSGLWWGNYNAVLESYKKARIKALKDGAELKYHRFDGSG). Residues 271–390 (RFTNQIQGGM…VWSVVFTFTT (120 aa)) are wedge domain (WED). Residues 391–404 (DCPTYDQRSSTGNR) are linker. The ruvC-I stretch occupies residues 405–618 (CGLNLGWKKQ…KNGTQIEQVS (214 aa)). Residues 618-650 (STASSATCSACKGKMEQVDGIMWRCRECRALVD) are target nucleic-acid binding (TNB). Zn(2+) is bound by residues Cys625, Cys628, Cys642, and Cys645. Residues 651-664 (QDINAAANLFREVL) are ruvC-II. A Mg(2+)-binding site is contributed by Asp652.

This sequence belongs to the CRISPR-associated DNA-binding protein Cas12m family. Requires Mg(2+) as cofactor. It depends on Zn(2+) as a cofactor.

CRISPR (clustered regularly interspaced short palindromic repeat), is an adaptive immune system that provides protection against mobile genetic elements (viruses, transposable elements and conjugative plasmids). CRISPR clusters contain sequences complementary to antecedent mobile elements and target invading nucleic acids. CRISPR clusters are transcribed and processed into CRISPR RNA (crRNA). Recognizes a short motif in the CRISPR repeat sequences (the 5' PAM or protospacer adjacent motif, 5'-CCN-3' in this organism) to help distinguish self versus nonself, as targets within the bacterial CRISPR locus do not have PAMs. Cas12m-crRNA binds DNA in a PAM-dependent, crRNA-guided fashion. DNA-binding probably inhibits transcription, leading to gene silencing. Upon expression in E.coli as a CRISPR region preferentially binds to its associated crRNA. Probably required for pre-crRNA processing to mature crRNA. This chain is CRISPR-associated DNA-binding protein Cas12m, found in Pelobacter propionicus (strain DSM 2379 / NBRC 103807 / OttBd1).